The following is a 1813-amino-acid chain: U3 small nucleolar RNA-associated protein 10 (1813 aa).

HEAT repeat units lie at residues 245–283 (DVLIRILPVLNDAFMLRKAPQLVVGCYMLCVVLANKASL), 389–427 (SETIEALTILLQAFSDLQRQGLVADGMGKQLSDLLLQFN), 428–464 (ESDTLAPLLRKAIENAGVDITQLEMTLETVLQADIMP), 584–621 (ADMQGILPYIISALADPSERVRREAAALLSLIDRLASK), and 659–695 (IIHHALMPALEEYVLDPDQVGRTLTQVIRGPRSQDDS). Disordered regions lie at residues 686-705 (IRGPRSQDDSDRTRSESTGV) and 887-912 (DLGSRGPPSKKRRTSQNNMVPMSSMD). The span at 690-705 (RSQDDSDRTRSESTGV) shows a compositional bias: basic and acidic residues. HEAT repeat units follow at residues 1058-1095 (QTIDQVVPPLVQSLRNQKRDVVSGTSELLLSFTTAFEH), 1189-1228 (KIAVDLLQALSHLLKFTSLRTKMSECFDSGTEQQVDKAHG), 1265-1302 (LSLVDFVDTIEVLLQRPSDDLRRKVIKLLENRLDSSND), 1309-1347 (ARVLSFLTVLINILETSPDILLKHAAVACIEKIGEKYGK), 1398-1437 (EALPRAIDLLRDTLAASDDDSQLHDAVYSLISALLIHVPW), 1678-1715 (LASISEPLIKQLSMATNSPTLDLVAAEAIPTIVELAVA), and 1769-1806 (ALLPEMLPYISELLEDDDENVEREVRRWVLSIEDILGE).

Belongs to the HEATR1/UTP10 family. Component of the ribosomal small subunit (SSU) processome.

The protein resides in the nucleus. Its subcellular location is the nucleolus. Involved in nucleolar processing of pre-18S ribosomal RNA. Involved in ribosome biosynthesis. The polypeptide is U3 small nucleolar RNA-associated protein 10 (Coccidioides immitis (strain RS) (Valley fever fungus)).